Here is a 202-residue protein sequence, read N- to C-terminus: IMP cyclohydrolase (202 aa).

Belongs to the archaeal IMP cyclohydrolase family.

It catalyses the reaction IMP + H2O = 5-formamido-1-(5-phospho-D-ribosyl)imidazole-4-carboxamide. It participates in purine metabolism; IMP biosynthesis via de novo pathway; IMP from 5-formamido-1-(5-phospho-D-ribosyl)imidazole-4-carboxamide: step 1/1. In terms of biological role, catalyzes the cyclization of 5-formylamidoimidazole-4-carboxamide ribonucleotide to IMP. This chain is IMP cyclohydrolase, found in Methanothermobacter thermautotrophicus (strain ATCC 29096 / DSM 1053 / JCM 10044 / NBRC 100330 / Delta H) (Methanobacterium thermoautotrophicum).